The following is a 159-amino-acid chain: Probable deoxyuridine 5'-triphosphate nucleotidohydrolase (159 aa).

Belongs to the dCTP deaminase family. Archaeal dUTPase subfamily.

It catalyses the reaction dUTP + H2O = dUMP + diphosphate + H(+). Its pathway is pyrimidine metabolism; dUMP biosynthesis; dUMP from dCTP (dUTP route): step 2/2. In terms of biological role, this enzyme is involved in nucleotide metabolism: it produces dUMP, the immediate precursor of thymidine nucleotides and it decreases the intracellular concentration of dUTP so that uracil cannot be incorporated into DNA. The chain is Probable deoxyuridine 5'-triphosphate nucleotidohydrolase from Aeropyrum pernix (strain ATCC 700893 / DSM 11879 / JCM 9820 / NBRC 100138 / K1).